Reading from the N-terminus, the 111-residue chain is UPF0339 protein ACIAD0721 (111 aa).

2 consecutive repeat copies span residues 10–58 (AKDG…RYER) and 61–109 (AKND…VKDL). The segment at 89–111 (SRDKGIESVKNNGTTATVKDLTG) is disordered.

It belongs to the UPF0339 family. Duplicated subfamily.

This is UPF0339 protein ACIAD0721 from Acinetobacter baylyi (strain ATCC 33305 / BD413 / ADP1).